Consider the following 419-residue polypeptide: MSGLPDHLRRPVRGMRDWLPPQYYALRHMEEVLCKVAESFGYRRVETPVVEHFEVLAKKAGQDVINEIYYFKDKAGRDLGLRFDMTVPVARVLSYNLELPRPVRWYYFTKVFRYDEPQHGRYREFYQFGVELVGSSSPRADAEVIQLLIASLEAAGASNFYVRINDRRAVDKLLEHLGVAPYRDIIYKALDKKLKLPREDVIKIMTGGGVSKEIAEEIYNTATEITIQEAVELLYKLDKALGASYEKIVKYLEASVPMERLKFDMSIVRGLDYYTGIVFEAFVGEYKLAVGGGGRYDDLLELYSGVKTPALGFAIGVERLMEAVGIQNVERPLDYYIYIFDDDAYKYAAAVAKKLRTEGYSVVVELGEKGLKDAFEYALKVGARHIIIIGRKELEKGVIKVRDLEKRIEVEKPLSQFLA.

The protein belongs to the class-II aminoacyl-tRNA synthetase family.

It localises to the cytoplasm. The enzyme catalyses tRNA(His) + L-histidine + ATP = L-histidyl-tRNA(His) + AMP + diphosphate + H(+). In Pyrobaculum aerophilum (strain ATCC 51768 / DSM 7523 / JCM 9630 / CIP 104966 / NBRC 100827 / IM2), this protein is Histidine--tRNA ligase.